The following is a 74-amino-acid chain: Defensin Lc-def (74 aa).

The signal sequence occupies residues 1-27; that stretch reads MEKKTVAALSFLFIVLFVAQEIAVTEA. Cystine bridges form between Cys30–Cys74, Cys41–Cys62, Cys47–Cys68, and Cys51–Cys70.

It is found in the secreted. Has antifungal activity against the phytopathogenic fungus A.niger VKM F-2259, but not against A.alternata VKM F-3047. Does not inhibit trypsin or chymotrypsin. The protein is Defensin Lc-def of Lens culinaris subsp. culinaris (Cultivated lentil).